We begin with the raw amino-acid sequence, 194 residues long: 3-isopropylmalate dehydratase small subunit (194 aa).

It belongs to the LeuD family. LeuD type 1 subfamily. Heterodimer of LeuC and LeuD.

The enzyme catalyses (2R,3S)-3-isopropylmalate = (2S)-2-isopropylmalate. It functions in the pathway amino-acid biosynthesis; L-leucine biosynthesis; L-leucine from 3-methyl-2-oxobutanoate: step 2/4. In terms of biological role, catalyzes the isomerization between 2-isopropylmalate and 3-isopropylmalate, via the formation of 2-isopropylmaleate. In Brevibacillus brevis (strain 47 / JCM 6285 / NBRC 100599), this protein is 3-isopropylmalate dehydratase small subunit.